We begin with the raw amino-acid sequence, 76 residues long: Small ribosomal subunit protein bS18 (76 aa).

It belongs to the bacterial ribosomal protein bS18 family. Part of the 30S ribosomal subunit. Forms a tight heterodimer with protein bS6.

Binds as a heterodimer with protein bS6 to the central domain of the 16S rRNA, where it helps stabilize the platform of the 30S subunit. This is Small ribosomal subunit protein bS18 from Methylococcus capsulatus (strain ATCC 33009 / NCIMB 11132 / Bath).